Here is a 72-residue protein sequence, read N- to C-terminus: Heat-stable enterotoxin C (72 aa).

An N-terminal signal peptide occupies residues methionine 1–glycine 19. Cystine bridges form between cysteine 60-cysteine 65, cysteine 61-cysteine 69, and cysteine 64-cysteine 72.

Belongs to the heat-stable enterotoxin family.

It is found in the secreted. In terms of biological role, toxin which activates the particulate form of guanylate cyclase and increases cyclic GMP levels within the host intestinal epithelial cells. Highly toxic. The sequence is that of Heat-stable enterotoxin C (ystC) from Yersinia enterocolitica.